A 990-amino-acid chain; its full sequence is Putative ariadne-like RING finger protein R811 (990 aa).

Residues Asp-8–Leu-201 form the VWFA domain. The TRIAD supradomain stretch occupies residues Glu-797–Asp-990. Cys-801, Cys-804, Cys-827, and Cys-830 together coordinate Zn(2+). The RING-type 1 zinc-finger motif lies at Cys-801–Cys-854. The segment at Lys-855 to Cys-903 adopts an IBR-type zinc-finger fold. Residues Cys-930 and Cys-935 each coordinate Zn(2+). The RING-type 2; atypical zinc-finger motif lies at Cys-930–Cys-961. The active site involves Cys-945. Zn(2+)-binding residues include Cys-950 and Cys-953.

This is Putative ariadne-like RING finger protein R811 from Acanthamoeba polyphaga (Amoeba).